Reading from the N-terminus, the 1217-residue chain is Nuclear matrix constituent protein 1 (1217 aa).

Polar residues predominate over residues 1–14; sequence MLTPQRSAWSLKSK. The disordered stretch occupies residues 1 to 45; sequence MLTPQRSAWSLKSKVSSEKPRSKGKGITKNLDSAATPFPPLGLLN. Positions 159-746 form a coiled coil; the sequence is VTDLEKALRE…KNQRAEFIKE (588 aa). Over residues 892-904 the composition is skewed to low complexity; the sequence is SEDAAANDNNPAA. Disordered regions lie at residues 892-969, 981-1057, 1087-1117, and 1152-1217; these read SEDA…VVDD, EEAK…VQAP, VQTK…HKVT, and ISEM…FFTT. Positions 947–960 are enriched in basic residues; sequence STRRGRGGKTVRRT. Composition is skewed to polar residues over residues 986-1007 and 1087-1103; these read SSQQ…TSNT and VQTK…NQIS. A compositionally biased stretch (low complexity) spans 1173 to 1186; that stretch reads EEPATPSSGSSTSG. Acidic residues predominate over residues 1189 to 1200; that stretch reads GNDDDMDDDDEE.

This sequence belongs to the CRWN family.

The protein localises to the nucleus matrix. It is found in the nucleus lamina. In terms of biological role, architectural component of nuclear structure that plays different roles in controlling nuclear size and morphology. Involved in the organization of multimeric complexes in the peripheral nucleoskeleton. The chain is Nuclear matrix constituent protein 1 from Allium cepa (Onion).